A 612-amino-acid chain; its full sequence is MDDHKPIDTPDGPAVDTPGIGAHRYEAPPTDRPITEAEAARAAGLAHNEHLKIASRYLRGGLADGLLKHATGAISEDDGQLVKFHGMYMQDDRDIRAERTKKKLEKAFSFMIRLRIAGGVVTPKQWLILDNIATTYAGNALRATTRQTFQYHGVIKSNLKRTMAAIDSALLDTIAACGDVNRNVMAATNPAQAGAHKAALQLAKDISDTLLPKTGAWREIWLDGERVVGGEDEAEVEPVYGKTYLPRKFKTVVAVPPSNEVDIFAHDLGFIAILDKKNRVTGWNVTVGGGMGMTHGETDTFPRTADVLGFVKPEDALKAAEAVMTVQRDWGNRKNRKNARLKYTIERFGLDAFRAEVEKRIGKKLEAPKPFTFENNGDRYGWVEGEDGRHHLTLYVPSGRIKDIDGGPQFLSGLRRIAEVHEGDFRLTGNQNVIIANVPAAKRAEIDALVDEYGLTRGASAIRRNSIACVALPTCGLALAESERYLPDLLTELEESLARHGLQDEPITIRSTGCPNGCARPFISEIGLVGRGPERYHLYLGAAFDGSRLSKLYREDVLASEIKDTLDPLFAAYAKDRQPGEHFGDFVIRAGFVAKTSNGPDFHERTGPLRAA.

A disordered region spans residues 1–32; that stretch reads MDDHKPIDTPDGPAVDTPGIGAHRYEAPPTDR. The [4Fe-4S] cluster site is built by C469, C475, C514, and C518. C518 lines the siroheme pocket.

The protein belongs to the nitrite and sulfite reductase 4Fe-4S domain family. Alpha(8)-beta(8). The alpha component is a flavoprotein, the beta component is a hemoprotein. The cofactor is siroheme. Requires [4Fe-4S] cluster as cofactor.

It catalyses the reaction hydrogen sulfide + 3 NADP(+) + 3 H2O = sulfite + 3 NADPH + 4 H(+). It participates in sulfur metabolism; hydrogen sulfide biosynthesis; hydrogen sulfide from sulfite (NADPH route): step 1/1. Functionally, component of the sulfite reductase complex that catalyzes the 6-electron reduction of sulfite to sulfide. This is one of several activities required for the biosynthesis of L-cysteine from sulfate. This chain is Sulfite reductase [NADPH] hemoprotein beta-component, found in Methylorubrum populi (strain ATCC BAA-705 / NCIMB 13946 / BJ001) (Methylobacterium populi).